Consider the following 92-residue polypeptide: Small ribosomal subunit protein uS19c (92 aa).

It belongs to the universal ribosomal protein uS19 family.

The protein resides in the plastid. Its subcellular location is the chloroplast. Its function is as follows. Protein S19 forms a complex with S13 that binds strongly to the 16S ribosomal RNA. The sequence is that of Small ribosomal subunit protein uS19c from Chara vulgaris (Common stonewort).